Reading from the N-terminus, the 264-residue chain is Secretory carrier-associated membrane protein 4 (264 aa).

Residues 1 to 33 (MNRHHDPNPFDEDEEIVNPFSKGGGRVPAASRP) form a disordered region. At 1 to 122 (MNRHHDPNPF…AQKLQYLAFA (122 aa)) the chain is on the cytoplasmic side. The stretch at 51-85 (MNDSSQKQRKLADWEAELRKKEMDIKRREEAIAKF) forms a coiled coil. Transmembrane regions (helical) follow at residues 123-143 (SWLG…VCWI), 150-170 (IFFL…VLWY), 185-205 (FGWF…AAIA), and 233-253 (IFYF…LWVL). Residues 254–264 (QKIYLYFRGNK) are Cytoplasmic-facing.

It belongs to the SCAMP family.

Its subcellular location is the cell membrane. It localises to the cytoplasmic vesicle. The protein resides in the secretory vesicle membrane. In terms of biological role, probably involved in membrane trafficking. This Arabidopsis thaliana (Mouse-ear cress) protein is Secretory carrier-associated membrane protein 4 (SCAMP4).